A 156-amino-acid chain; its full sequence is Low molecular weight phosphotyrosine protein phosphatase (156 aa).

The active-site Nucleophile is Cys-11. Arg-17 is an active-site residue. Asp-128 (proton donor) is an active-site residue.

Belongs to the low molecular weight phosphotyrosine protein phosphatase family.

The protein resides in the cytoplasm. It catalyses the reaction O-phospho-L-tyrosyl-[protein] + H2O = L-tyrosyl-[protein] + phosphate. It carries out the reaction a phosphate monoester + H2O = an alcohol + phosphate. In terms of biological role, may contribute to dephosphorylation of 'Tyr-15' of cdc2. The polypeptide is Low molecular weight phosphotyrosine protein phosphatase (stp1) (Schizosaccharomyces pombe (strain 972 / ATCC 24843) (Fission yeast)).